We begin with the raw amino-acid sequence, 603 residues long: Sesquiterpene synthase Cad (603 aa).

Residues Met-1–Ser-13 show a composition bias toward polar residues. The interval Met-1–Gln-23 is disordered. Asp-357, Asp-361, Asp-498, and Glu-506 together coordinate Mg(2+). A DDXXD motif motif is present at residues Asp-357–Asp-361.

Belongs to the terpene synthase family. Tpsa subfamily. The cofactor is Mg(2+). Requires Mn(2+) as cofactor. Mostly expressed in leaves and, to a lower extent, in stems and xylem.

It carries out the reaction (2E,6E)-farnesyl diphosphate = beta-cadinene + diphosphate. It participates in secondary metabolite biosynthesis; terpenoid biosynthesis. Functionally, sesquiterpene synthase involved in the biosynthesis of volatile compounds. Mediates the conversion of (2E,6E)-farnesyl diphosphate (FPP) into beta-cadinene. Not active with geranyl diphosphate (GPP) and geranylgeranyl diphosphate (GGPP) as substrates. The polypeptide is Sesquiterpene synthase Cad (Chamaecyparis formosensis (Formosan cypress)).